We begin with the raw amino-acid sequence, 194 residues long: Mitochondrial import inner membrane translocase subunit Tim22 (194 aa).

Intrachain disulfides connect Cys69/Cys141 and Cys160/Cys179. Transmembrane regions (helical) follow at residues 74–94, 123–143, and 170–190; these read VLACVGGFVLGGAFGIFTAGI, MSYAKNFAIVGAMFSCTECLV, and AGVKAGAIGCGGFAAFSAAID.

This sequence belongs to the Tim17/Tim22/Tim23 family. Component of the TIM22 complex, whose core is composed of TIMM22, associated with peripheral protein FXC1/TIMM10B and the 70 kDa heterohexamer. In most cases, the 70 kDa complex is composed of TIMM9 and TIMM10 (TIMM10A or TIMM10B). A small fraction of the 70 kDa complex is composed of TIMM8 (TIMM8A/DDP1 or TIMM8B/DDP2) and TIMM13. The TIM22 complex also contains AGK and TIMM29. Interacts directly with TIMM9, TIMM10A and FXC1/TIMM10B. Interacts (when oxidized) with TIMM29; interaction is direct. Disulfide bonds promote efficient assembly of the TIM22 complex.

It localises to the mitochondrion inner membrane. Its function is as follows. Essential core component of the TIM22 complex, a complex that mediates the import and insertion of multi-pass transmembrane proteins into the mitochondrial inner membrane. In the TIM22 complex, it constitutes the voltage-activated and signal-gated channel. Forms a twin-pore translocase that uses the membrane potential as external driving force in 2 voltage-dependent steps. This Mus musculus (Mouse) protein is Mitochondrial import inner membrane translocase subunit Tim22 (Timm22).